Reading from the N-terminus, the 139-residue chain is Large ribosomal subunit protein bL20 (139 aa).

It belongs to the bacterial ribosomal protein bL20 family.

In terms of biological role, binds directly to 23S ribosomal RNA and is necessary for the in vitro assembly process of the 50S ribosomal subunit. It is not involved in the protein synthesizing functions of that subunit. This Leuconostoc citreum (strain KM20) protein is Large ribosomal subunit protein bL20.